We begin with the raw amino-acid sequence, 93 residues long: Early E3A 10.5 kDa glycoprotein (93 aa).

Residue asparagine 3 is glycosylated (N-linked (GlcNAc...) asparagine; by host). The chain crosses the membrane as a helical span at residues 34 to 55 (MWWFSIALMFVCLIIMWLICCL).

This sequence belongs to the adenoviridae E3A-1 family. Post-translationally, N-glycosylated and probably also O-glycosylated.

The protein localises to the host nucleus membrane. This is Early E3A 10.5 kDa glycoprotein from Homo sapiens (Human).